Reading from the N-terminus, the 326-residue chain is Malate dehydrogenase (326 aa).

12-18 (GGTGQIA) provides a ligand contact to NAD(+). Substrate contacts are provided by R93 and R99. NAD(+) is bound by residues N106, Q113, and 130–132 (VGN). Positions 132 and 163 each coordinate substrate. The Proton acceptor role is filled by H188.

The protein belongs to the LDH/MDH superfamily. MDH type 2 family.

The enzyme catalyses (S)-malate + NAD(+) = oxaloacetate + NADH + H(+). Catalyzes the reversible oxidation of malate to oxaloacetate. The sequence is that of Malate dehydrogenase from Chlamydia trachomatis serovar L2 (strain ATCC VR-902B / DSM 19102 / 434/Bu).